The chain runs to 137 residues: Histone H3-like 2 (137 aa).

Residues M1–G36 are disordered. N6,N6,N6-trimethyllysine; alternate is present on residues K5 and K10. K5 and K10 each carry N6,N6-dimethyllysine; alternate. 2 positions are modified to N6-methyllysine; alternate: K5 and K10. K10 is modified (N6-acetyllysine; alternate). The residue at position 11 (S11) is a Phosphoserine. At T12 the chain carries Phosphothreonine. N6-acetyllysine is present on K15. N6-methyllysine; alternate occurs at positions 19, 24, 28, and 38. N6-acetyllysine; alternate occurs at positions 19 and 24. The span at A25–G36 shows a compositional bias: basic residues. 2 positions are modified to N6,N6,N6-trimethyllysine; alternate: K28 and K38. N6,N6-dimethyllysine; alternate occurs at positions 28 and 38.

This sequence belongs to the histone H3 family. In terms of assembly, the nucleosome is a histone octamer containing two molecules each of H2A, H2B, H3 and H4 assembled in one H3-H4 heterotetramer and two H2A-H2B heterodimers. The octamer wraps approximately 147 bp of DNA. Pollen specific.

Its subcellular location is the nucleus. The protein localises to the chromosome. Its function is as follows. Core component of nucleosome. Nucleosomes wrap and compact DNA into chromatin, limiting DNA accessibility to the cellular machineries which require DNA as a template. Histones thereby play a central role in transcription regulation, DNA repair, DNA replication and chromosomal stability. DNA accessibility is regulated via a complex set of post-translational modifications of histones, also called histone code, and nucleosome remodeling. In Arabidopsis thaliana (Mouse-ear cress), this protein is Histone H3-like 2 (MGH3).